Reading from the N-terminus, the 556-residue chain is MSVQTVSIQPFGDQKPGTSGLRKKVKIFQQENYTESFLTSIFLSIPEGAQDAFLVIGGDGRYYNSDVIQKIAKIGAAYGVKKLIVGQNGILSTPAASNLIRKRKATGGILLTASHNPGGPDNDFGIKYNLTNGAPAPEQVTNKIYEVSKSLTSYKYIDLPEVDTTTVGTRSYGPLEVEVVHSTEDYVSMMKEIFDFDLIRSFLKKHPDFKVLFDGMHGVTGPYGIDIFVNELGLPSSSTMNCIPKPDFGGGHPDPNLVYAHELVEAVDKNGIHFGAASDGDGDRNMIYGANTFVSPGDSLAIIAHHAKLIPWFQKHGVDGLARSMPTSGAVDRVAKAQGLQSYEVPTGWKFFCNLFDNKKMSICGEESFGTGSNHIREKDGVWAIVAWLNVIAGVAEQKPNETPSIASIQAEFWETYGRTFFTRYDYENVDSDGANKLIAALSEKAVDNKSSFVGSTISGRKVVDSGNFAYTDLDGSVTKNQGLYVKFDDGSRLVVRLSGTGSSGATIRLYVEKYEGDKSKYQMATQDYLKDNVGLALELLKFKEFVGREEPDVKT.

Residues Arg-22 and Ser-114 each coordinate alpha-D-glucose 1,6-bisphosphate. The active-site Phosphoserine intermediate is the Ser-114. Mg(2+) contacts are provided by Ser-114, Asp-279, Asp-281, and Asp-283. A Phosphoserine modification is found at Ser-114. 6 residues coordinate alpha-D-glucose 1,6-bisphosphate: Asp-283, Arg-284, Thr-347, Glu-366, Ser-368, and Lys-379.

It belongs to the phosphohexose mutase family. Monomer. It depends on Mg(2+) as a cofactor.

It is found in the cytoplasm. The enzyme catalyses alpha-D-glucose 1-phosphate = alpha-D-glucose 6-phosphate. It carries out the reaction O-phospho-L-seryl-[protein] + alpha-D-glucose 1-phosphate = alpha-D-glucose 1,6-bisphosphate + L-seryl-[protein]. The catalysed reaction is alpha-D-glucose 1,6-bisphosphate + L-seryl-[protein] = O-phospho-L-seryl-[protein] + alpha-D-glucose 6-phosphate. Functionally, catalyzes the reversible isomerization of alpha-D-glucose 1-phosphate to alpha-D-glucose 6-phosphate. The mechanism proceeds via the intermediate compound alpha-D-glucose 1,6-bisphosphate. Key enzyme in hexose metabolism. The reverse reaction is an essential step for biosynthesis because glucose 1-phosphate is the starting point for the synthesis of UDP-glucose, which acts as a precursor for the synthesis of oligosaccharides and trehalose. This Emericella nidulans (strain FGSC A4 / ATCC 38163 / CBS 112.46 / NRRL 194 / M139) (Aspergillus nidulans) protein is Phosphoglucomutase (pgmB).